The sequence spans 252 residues: Cytochrome c oxidase subunit 2 (252 aa).

The Mitochondrial intermembrane portion of the chain corresponds to 1-39; the sequence is MFLIMLKGHILMDAPTPWGIFFQDSASPQMEGIMELHNN. A helical membrane pass occupies residues 40 to 59; sequence IMFYLAIILFTVTWMMITII. Residues 60–81 lie on the Mitochondrial matrix side of the membrane; the sequence is RNFVAKKSPIAHKYMNHGTLIE. The chain crosses the membrane as a helical span at residues 82–105; that stretch reads LIWTITPAFILILIAFPSFKLLYL. Residues 106-252 lie on the Mitochondrial intermembrane side of the membrane; sequence MDEVMDPSLV…LLWLRDQMEG (147 aa). Cu cation-binding residues include His-184, Cys-219, Glu-221, Cys-223, His-227, and Met-230. Glu-221 serves as a coordination point for Mg(2+).

Belongs to the cytochrome c oxidase subunit 2 family. In terms of assembly, component of the cytochrome c oxidase (complex IV, CIV), a multisubunit enzyme composed of a catalytic core of 3 subunits and several supernumerary subunits. The complex exists as a monomer or a dimer and forms supercomplexes (SCs) in the inner mitochondrial membrane with ubiquinol-cytochrome c oxidoreductase (cytochrome b-c1 complex, complex III, CIII). Requires Cu cation as cofactor.

The protein localises to the mitochondrion inner membrane. The catalysed reaction is 4 Fe(II)-[cytochrome c] + O2 + 8 H(+)(in) = 4 Fe(III)-[cytochrome c] + 2 H2O + 4 H(+)(out). In terms of biological role, component of the cytochrome c oxidase, the last enzyme in the mitochondrial electron transport chain which drives oxidative phosphorylation. The respiratory chain contains 3 multisubunit complexes succinate dehydrogenase (complex II, CII), ubiquinol-cytochrome c oxidoreductase (cytochrome b-c1 complex, complex III, CIII) and cytochrome c oxidase (complex IV, CIV), that cooperate to transfer electrons derived from NADH and succinate to molecular oxygen, creating an electrochemical gradient over the inner membrane that drives transmembrane transport and the ATP synthase. Cytochrome c oxidase is the component of the respiratory chain that catalyzes the reduction of oxygen to water. Electrons originating from reduced cytochrome c in the intermembrane space (IMS) are transferred via the dinuclear copper A center (CU(A)) of subunit 2 and heme A of subunit 1 to the active site in subunit 1, a binuclear center (BNC) formed by heme A3 and copper B (CU(B)). The BNC reduces molecular oxygen to 2 water molecules using 4 electrons from cytochrome c in the IMS and 4 protons from the mitochondrial matrix. The protein is Cytochrome c oxidase subunit 2 (cox2) of Emericella nidulans (Aspergillus nidulans).